The sequence spans 161 residues: Beta-lactoglobulin-1 (161 aa).

2 disulfide bridges follow: cysteine 66–cysteine 159 and cysteine 106–cysteine 119.

The protein belongs to the calycin superfamily. Lipocalin family. In terms of assembly, monomer. Synthesized in mammary gland and secreted in milk.

Its subcellular location is the secreted. Functionally, primary component of whey, it binds retinol and is probably involved in the transport of that molecule. This Canis lupus familiaris (Dog) protein is Beta-lactoglobulin-1 (LGB1).